A 434-amino-acid chain; its full sequence is Tryptophan--tRNA ligase (434 aa).

Residues 14–16 (TTS) and 22–23 (GN) each bind ATP. The 'HIGH' region motif lies at 15 to 23 (TSGTPHLGN). Aspartate 147 lines the L-tryptophan pocket. ATP is bound by residues 159-161 (GRD), leucine 199, and 206-210 (KMSKS). The short motif at 206–210 (KMSKS) is the 'KMSKS' region element.

This sequence belongs to the class-I aminoacyl-tRNA synthetase family. Homodimer.

The protein localises to the cytoplasm. It catalyses the reaction tRNA(Trp) + L-tryptophan + ATP = L-tryptophyl-tRNA(Trp) + AMP + diphosphate + H(+). Its function is as follows. Catalyzes the attachment of tryptophan to tRNA(Trp). The sequence is that of Tryptophan--tRNA ligase from Xylella fastidiosa (strain 9a5c).